The chain runs to 101 residues: NAD(P)H-quinone oxidoreductase subunit 4L, chloroplastic (101 aa).

Transmembrane regions (helical) follow at residues 2–22 (MLEH…YGLI), 32–52 (MCLE…SDLF), and 61–81 (IFSI…PAIV).

The protein belongs to the complex I subunit 4L family. NDH is composed of at least 16 different subunits, 5 of which are encoded in the nucleus.

It localises to the plastid. The protein localises to the chloroplast thylakoid membrane. It catalyses the reaction a plastoquinone + NADH + (n+1) H(+)(in) = a plastoquinol + NAD(+) + n H(+)(out). The catalysed reaction is a plastoquinone + NADPH + (n+1) H(+)(in) = a plastoquinol + NADP(+) + n H(+)(out). Its function is as follows. NDH shuttles electrons from NAD(P)H:plastoquinone, via FMN and iron-sulfur (Fe-S) centers, to quinones in the photosynthetic chain and possibly in a chloroplast respiratory chain. The immediate electron acceptor for the enzyme in this species is believed to be plastoquinone. Couples the redox reaction to proton translocation, and thus conserves the redox energy in a proton gradient. This Illicium oligandrum (Star anise) protein is NAD(P)H-quinone oxidoreductase subunit 4L, chloroplastic.